The primary structure comprises 589 residues: Kelch-like protein 25 (589 aa).

One can recognise a BTB domain in the interval 46-114 (TDVTLWAGDR…AYSSRIAINE (69 aa)). One can recognise a BACK domain in the interval 149 to 250 (CLGMMLLSDA…LPSDCLQEAV (102 aa)). Kelch repeat units follow at residues 296 to 340 (TLLI…AIGC), 341 to 388 (KVYV…ELEN), 389 to 444 (CLYV…SAKL), 446 to 492 (LFVF…VLGS), 494 to 538 (IFIM…ASGN), and 539 to 585 (KLYV…STWK).

As to quaternary structure, component of the BCR(KLHL25) E3 ubiquitin ligase complex, at least composed of CUL3, KLHL25 and RBX1.

It participates in protein modification; protein ubiquitination. Its function is as follows. Substrate-specific adapter of a BCR (BTB-CUL3-RBX1) E3 ubiquitin ligase complex involved in various processes, such as translation homeostasis and lipid synthesis. The BCR(KLHL25) ubiquitin ligase complex acts by mediating ubiquitination of hypophosphorylated EIF4EBP1 (4E-BP1): ubiquitination and subsequent degradation of hypophosphorylated EIF4EBP1 (4E-BP1) probably serves as a homeostatic mechanism to maintain translation and prevent eIF4E inhibition when eIF4E levels are low. The BCR(KLHL25) complex does not target EIF4EBP1 (4E-BP1) when it is hyperphosphorylated or associated with eIF4E. The BCR(KLHL25) complex also acts as a regulator of lipid synthesis by mediating ubiquitination and degradation of ACLY, thereby inhibiting lipid synthesis. BCR(KLHL25)-mediated degradation of ACLY promotes fatty acid oxidation and is required for differentiation of inducible regulatory T (iTreg) cells. This chain is Kelch-like protein 25, found in Homo sapiens (Human).